The primary structure comprises 612 residues: Dihydroxy-acid dehydratase (612 aa).

A Mg(2+)-binding site is contributed by Asp81. Residue Cys122 participates in [2Fe-2S] cluster binding. Positions 123 and 124 each coordinate Mg(2+). At Lys124 the chain carries N6-carboxylysine. Cys196 lines the [2Fe-2S] cluster pocket. Glu492 lines the Mg(2+) pocket. Ser518 (proton acceptor) is an active-site residue.

Belongs to the IlvD/Edd family. As to quaternary structure, homodimer. The cofactor is [2Fe-2S] cluster. Mg(2+) serves as cofactor.

It catalyses the reaction (2R)-2,3-dihydroxy-3-methylbutanoate = 3-methyl-2-oxobutanoate + H2O. It carries out the reaction (2R,3R)-2,3-dihydroxy-3-methylpentanoate = (S)-3-methyl-2-oxopentanoate + H2O. The protein operates within amino-acid biosynthesis; L-isoleucine biosynthesis; L-isoleucine from 2-oxobutanoate: step 3/4. It participates in amino-acid biosynthesis; L-valine biosynthesis; L-valine from pyruvate: step 3/4. Functions in the biosynthesis of branched-chain amino acids. Catalyzes the dehydration of (2R,3R)-2,3-dihydroxy-3-methylpentanoate (2,3-dihydroxy-3-methylvalerate) into 2-oxo-3-methylpentanoate (2-oxo-3-methylvalerate) and of (2R)-2,3-dihydroxy-3-methylbutanoate (2,3-dihydroxyisovalerate) into 2-oxo-3-methylbutanoate (2-oxoisovalerate), the penultimate precursor to L-isoleucine and L-valine, respectively. The chain is Dihydroxy-acid dehydratase from Paracoccus denitrificans (strain Pd 1222).